The primary structure comprises 101 residues: MGTRYFLALFLILLVLGFKVQGVAMAQEDEADSPGLLTRMQESLFSYWDTAKAAAQDLYQKTYLPTMDEKIRDIYNKSTAAVTTYAGIFTDQLLSLLKGDQ.

An N-terminal signal peptide occupies residues 1–26 (MGTRYFLALFLILLVLGFKVQGVAMA). Positions 66 to 74 (TMDEKIRDI) are lipid binding. The segment at 78–101 (STAAVTTYAGIFTDQLLSLLKGDQ) is lipoprotein lipase cofactor.

The protein belongs to the apolipoprotein C2 family. Proapolipoprotein C-II is synthesized as a sialic acid containing glycoprotein which is subsequently desialylated prior to its proteolytic processing. Post-translationally, proapolipoprotein C-II undergoes proteolytic cleavage of its N-terminal hexapeptide to generate apolipoprotein C-II. In bovine, proapolipoprotein C-II was found to be the minor form whereas apolipoprotein C-II was found to be the major form in plasma.

It is found in the secreted. Its function is as follows. Component of chylomicrons, very low-density lipoproteins (VLDL), low-density lipoproteins (LDL), and high-density lipoproteins (HDL) in plasma. Plays an important role in lipoprotein metabolism as an activator of lipoprotein lipase. Both proapolipoprotein C-II and apolipoprotein C-II can activate lipoprotein lipase. This is Apolipoprotein C-II (APOC2) from Camelus dromedarius (Dromedary).